The sequence spans 208 residues: Glutathione S-transferase 1-1 (208 aa).

In terms of domain architecture, GST N-terminal spans Met-1–Asp-80. Glutathione-binding positions include Ser-9, His-50–Ile-52, and Glu-64–Arg-66. The region spanning Cys-86–Phe-207 is the GST C-terminal domain.

Belongs to the GST superfamily. Theta family. In terms of assembly, homodimer.

It carries out the reaction RX + glutathione = an S-substituted glutathione + a halide anion + H(+). Conjugation of reduced glutathione to a wide number of exogenous and endogenous hydrophobic electrophiles. The chain is Glutathione S-transferase 1-1 (GST1) from Lucilia cuprina (Green bottle fly).